We begin with the raw amino-acid sequence, 346 residues long: Protein MelA (346 aa).

VOC domains are found at residues 12 to 141 and 155 to 305; these read GIEF…DFEA and EVDH…IFTK. Fe cation is bound by residues H158, H237, and E314.

The protein belongs to the 4HPPD family. Fe cation serves as cofactor.

The protein resides in the cytoplasm. It functions in the pathway pigment biosynthesis; melanin biosynthesis. This is Protein MelA (melA) from Shewanella colwelliana (Alteromonas colwelliana).